A 250-amino-acid polypeptide reads, in one-letter code: Homeobox protein DLL-1 (250 aa).

Disordered regions lie at residues 40-66 (YPSL…SGSN) and 84-106 (SPYL…PDQQ). The span at 84-98 (SPYLQSCNSNTTTQS) shows a compositional bias: polar residues. Residues 125 to 184 (IRKPRTIYSSLQLQALNHRFQQTQYLALPERAELAASLGVTQTQVKIWFQNKRSKYKKLI) constitute a DNA-binding region (homeobox).

This sequence belongs to the distal-less homeobox family.

It localises to the nucleus. The chain is Homeobox protein DLL-1 (dll1) from Xenopus laevis (African clawed frog).